We begin with the raw amino-acid sequence, 329 residues long: Glycerol-3-phosphate dehydrogenase [NAD(P)+] (329 aa).

The NADPH site is built by Trp-11, Arg-30, and Lys-103. Sn-glycerol 3-phosphate is bound by residues Lys-103, Gly-132, and Ser-134. An NADPH-binding site is contributed by Ala-136. Residues Lys-187, Asp-240, Ser-250, Arg-251, and Asn-252 each contribute to the sn-glycerol 3-phosphate site. Lys-187 functions as the Proton acceptor in the catalytic mechanism. Arg-251 is an NADPH binding site. NADPH is bound by residues Val-275 and Glu-277.

The protein belongs to the NAD-dependent glycerol-3-phosphate dehydrogenase family.

The protein resides in the cytoplasm. The enzyme catalyses sn-glycerol 3-phosphate + NAD(+) = dihydroxyacetone phosphate + NADH + H(+). It carries out the reaction sn-glycerol 3-phosphate + NADP(+) = dihydroxyacetone phosphate + NADPH + H(+). It functions in the pathway membrane lipid metabolism; glycerophospholipid metabolism. Catalyzes the reduction of the glycolytic intermediate dihydroxyacetone phosphate (DHAP) to sn-glycerol 3-phosphate (G3P), the key precursor for phospholipid synthesis. This chain is Glycerol-3-phosphate dehydrogenase [NAD(P)+], found in Nitrosomonas europaea (strain ATCC 19718 / CIP 103999 / KCTC 2705 / NBRC 14298).